Reading from the N-terminus, the 579-residue chain is General transcriptional corepressor tupA (579 aa).

Residues 83–101 (NINASQRDLNSPSTFRSNS) are compositionally biased toward polar residues. The segment at 83 to 258 (NINASQRDLN…ENGKEKGTDW (176 aa)) is disordered. 3 stretches are compositionally biased toward low complexity: residues 109-128 (NNNN…NNNN), 157-198 (QQPG…LSPL), and 207-224 (MGNN…NNNN). Basic and acidic residues predominate over residues 227-256 (KKPDMEEVKEEDRRRHDTEMSEENGKEKGT). WD repeat units lie at residues 279 to 319 (QHNS…HAFV), 325 to 364 (DGDL…IQHT), 367 to 406 (GHEL…CAFT), 413 to 452 (GPKN…FLER), 455 to 494 (GHLD…SRSR), 501 to 540 (GHKD…THMM), and 543 to 579 (GHKN…KYDS).

The protein belongs to the WD repeat TUP1 family. In terms of assembly, associates with trfA to form the trfA-tupA corepressor complex.

The protein localises to the nucleus. Functionally, acts as a component of the trfA-tupA corepressor complex which is involved in the repression of many genes in a wide variety of physiological processes. May also be involved in the derepression of at least some target genes. The complex is recruited to target genes by interaction with DNA-bound transcriptional repressors. The complex recruits histone deacetylases to produce a repressive chromatin structure, interacts with hypoacetylated N-terminal tails of histones H3 and H4 that have been programmed for repression by the action of histone deacetylases and interferes directly with the transcriptional machinery by associating with the RNA polymerase II mediator complex. The chain is General transcriptional corepressor tupA (tupA) from Dictyostelium discoideum (Social amoeba).